The chain runs to 325 residues: Deoxyhypusine hydroxylase (325 aa).

Serine 2 is modified (N-acetylserine). 2 HEAT-like PBS-type repeats span residues 77–103 and 110–136; these read LKHEVAYVLGQTKNLDAAPTLRHVMLD and VRHEAAEALGALGDKDSLDDLNKAAKE. Histidine 79, glutamate 80, histidine 112, and glutamate 113 together coordinate Fe cation. A Phosphoserine modification is found at serine 126. Threonine 187 bears the Phosphothreonine mark. HEAT-like PBS-type repeat units lie at residues 202–231, 235–261, and 268–294; these read LFQRYRAMFRLRDIGTDEAILALATGFSAE, FKHEIAYVFGQIGSPAAVPSLIEVLGR, and VRHEAAEALGAIASPEVVDVLKSYLND. Fe cation contacts are provided by histidine 237, glutamate 238, histidine 270, and glutamate 271. Residue serine 281 is modified to Phosphoserine.

It belongs to the deoxyhypusine hydroxylase family. Requires Fe(2+) as cofactor.

The protein localises to the cytoplasm. It is found in the nucleus. It catalyses the reaction [eIF5A protein]-deoxyhypusine + AH2 + O2 = [eIF5A protein]-hypusine + A + H2O. Its pathway is protein modification; eIF5A hypusination. Catalyzes the hydroxylation of the N(6)-(4-aminobutyl)-L-lysine intermediate to form hypusine, an essential post-translational modification only found in mature eIF-5A factor. The sequence is that of Deoxyhypusine hydroxylase from Saccharomyces cerevisiae (strain ATCC 204508 / S288c) (Baker's yeast).